Reading from the N-terminus, the 643-residue chain is Threonine--tRNA ligase (643 aa).

The 61-residue stretch at 1-61 folds into the TGS domain; sequence MIKVSLKDGS…NEDVSLSICT (61 aa). Residues 240–540 are catalytic; it reads DHNKLGRELK…LIEKYAGAFP (301 aa). Residues C335, H386, and H517 each contribute to the Zn(2+) site.

Belongs to the class-II aminoacyl-tRNA synthetase family. Homodimer. Zn(2+) serves as cofactor.

It is found in the cytoplasm. The enzyme catalyses tRNA(Thr) + L-threonine + ATP = L-threonyl-tRNA(Thr) + AMP + diphosphate + H(+). Functionally, catalyzes the attachment of threonine to tRNA(Thr) in a two-step reaction: L-threonine is first activated by ATP to form Thr-AMP and then transferred to the acceptor end of tRNA(Thr). Also edits incorrectly charged L-seryl-tRNA(Thr). The chain is Threonine--tRNA ligase from Clostridium botulinum (strain Alaska E43 / Type E3).